Here is a 196-residue protein sequence, read N- to C-terminus: Charged multivesicular body protein 1a (196 aa).

An N-acetylmethionine modification is found at M1. A coiled-coil region spans residues 5-42 (LFQLKFTAKQLEKLAKKAEKDSKAEQAKVKKALQQKNV). The residue at position 101 (S101) is a Phosphoserine. Residues 102–124 (AMDLQKVSAVMDRFEQQVQNLDV) adopt a coiled-coil conformation. Phosphoserine is present on S173. The MIT-interacting motif motif lies at 185-195 (DQLSRRLAALR).

This sequence belongs to the SNF7 family. As to quaternary structure, probable peripherally associated component of the endosomal sorting required for transport complex III (ESCRT-III). ESCRT-III components are thought to multimerize to form a flat lattice on the perimeter membrane of the endosome. Several assembly forms of ESCRT-III may exist that interact and act sequentially. Self-associates. Interacts with CHMP1B. Interacts with VPS4A. Interacts with VPS4B. Interacts with PHF1. Interacts with IST1. Interacts with MITD1. Highly expressed in adult heart, kidney and liver. Expressed at lower levels in adult colon, spleen, lung, brain, testis and muscle. Also expressed in myoblasts and embryo fibroblasts.

The protein resides in the cytoplasm. Its subcellular location is the endosome membrane. The protein localises to the nucleus matrix. Functionally, probable peripherally associated component of the endosomal sorting required for transport complex III (ESCRT-III) which is involved in multivesicular bodies (MVBs) formation and sorting of endosomal cargo proteins into MVBs. MVBs contain intraluminal vesicles (ILVs) that are generated by invagination and scission from the limiting membrane of the endosome and mostly are delivered to lysosomes enabling degradation of membrane proteins, such as stimulated growth factor receptors, lysosomal enzymes and lipids. The MVB pathway appears to require the sequential function of ESCRT-O, -I,-II and -III complexes. ESCRT-III proteins mostly dissociate from the invaginating membrane before the ILV is released. The ESCRT machinery also functions in topologically equivalent membrane fission events, such as the terminal stages of cytokinesis. ESCRT-III proteins are believed to mediate the necessary vesicle extrusion and/or membrane fission activities, possibly in conjunction with the AAA ATPase VPS4. Involved in cytokinesis. Involved in recruiting VPS4A and/or VPS4B to the midbody of dividing cells. May also be involved in chromosome condensation. Targets the Polycomb group (PcG) protein BMI1/PCGF4 to regions of condensed chromatin. May play a role in stable cell cycle progression and in PcG gene silencing. The chain is Charged multivesicular body protein 1a (Chmp1a) from Mus musculus (Mouse).